An 81-amino-acid polypeptide reads, in one-letter code: ATP synthase subunit c (81 aa).

The next 2 membrane-spanning stretches (helical) occupy residues 7-27 and 57-77; these read AASV…PGLG and LAFM…LLFA.

Belongs to the ATPase C chain family. In terms of assembly, F-type ATPases have 2 components, F(1) - the catalytic core - and F(0) - the membrane proton channel. F(1) has five subunits: alpha(3), beta(3), gamma(1), delta(1), epsilon(1). F(0) has four main subunits: a(1), b(1), b'(1) and c(10-14). The alpha and beta chains form an alternating ring which encloses part of the gamma chain. F(1) is attached to F(0) by a central stalk formed by the gamma and epsilon chains, while a peripheral stalk is formed by the delta, b and b' chains.

It is found in the cellular thylakoid membrane. Its function is as follows. F(1)F(0) ATP synthase produces ATP from ADP in the presence of a proton or sodium gradient. F-type ATPases consist of two structural domains, F(1) containing the extramembraneous catalytic core and F(0) containing the membrane proton channel, linked together by a central stalk and a peripheral stalk. During catalysis, ATP synthesis in the catalytic domain of F(1) is coupled via a rotary mechanism of the central stalk subunits to proton translocation. Key component of the F(0) channel; it plays a direct role in translocation across the membrane. A homomeric c-ring of between 10-14 subunits forms the central stalk rotor element with the F(1) delta and epsilon subunits. The sequence is that of ATP synthase subunit c from Synechococcus sp. (strain JA-3-3Ab) (Cyanobacteria bacterium Yellowstone A-Prime).